The sequence spans 543 residues: CTP synthase (543 aa).

The interval 1 to 265 (MARYIFITGG…DDEVLAAFGI (265 aa)) is amidoligase domain. Ser13 is a binding site for CTP. Ser13 contributes to the UTP binding site. 14–19 (SLGKGL) lines the ATP pocket. Residue Tyr54 participates in L-glutamine binding. Asp71 is a binding site for ATP. 2 residues coordinate Mg(2+): Asp71 and Glu139. CTP is bound by residues 146 to 148 (DIE), 186 to 191 (KTKPTQ), and Lys222. UTP is bound by residues 186-191 (KTKPTQ) and Lys222. 238–240 (RDV) provides a ligand contact to ATP. In terms of domain architecture, Glutamine amidotransferase type-1 spans 291–542 (TIAIVGKYTG…VQAAVVQSRL (252 aa)). L-glutamine is bound at residue Gly353. The active-site Nucleophile; for glutamine hydrolysis is Cys380. Residues 381 to 384 (FGMQ), Glu404, and Arg470 each bind L-glutamine. Residues His515 and Glu517 contribute to the active site.

It belongs to the CTP synthase family. Homotetramer.

The enzyme catalyses UTP + L-glutamine + ATP + H2O = CTP + L-glutamate + ADP + phosphate + 2 H(+). It catalyses the reaction L-glutamine + H2O = L-glutamate + NH4(+). The catalysed reaction is UTP + NH4(+) + ATP = CTP + ADP + phosphate + 2 H(+). It participates in pyrimidine metabolism; CTP biosynthesis via de novo pathway; CTP from UDP: step 2/2. With respect to regulation, allosterically activated by GTP, when glutamine is the substrate; GTP has no effect on the reaction when ammonia is the substrate. The allosteric effector GTP functions by stabilizing the protein conformation that binds the tetrahedral intermediate(s) formed during glutamine hydrolysis. Inhibited by the product CTP, via allosteric rather than competitive inhibition. Its function is as follows. Catalyzes the ATP-dependent amination of UTP to CTP with either L-glutamine or ammonia as the source of nitrogen. Regulates intracellular CTP levels through interactions with the four ribonucleotide triphosphates. The sequence is that of CTP synthase from Rhodopseudomonas palustris (strain BisB18).